Reading from the N-terminus, the 482-residue chain is ATP synthase subunit beta (482 aa).

Position 161-168 (161-168) interacts with ATP; that stretch reads GGAGVGKT.

Belongs to the ATPase alpha/beta chains family. F-type ATPases have 2 components, CF(1) - the catalytic core - and CF(0) - the membrane proton channel. CF(1) has five subunits: alpha(3), beta(3), gamma(1), delta(1), epsilon(1). CF(0) has three main subunits: a(1), b(2) and c(9-12). The alpha and beta chains form an alternating ring which encloses part of the gamma chain. CF(1) is attached to CF(0) by a central stalk formed by the gamma and epsilon chains, while a peripheral stalk is formed by the delta and b chains.

It localises to the cell inner membrane. The catalysed reaction is ATP + H2O + 4 H(+)(in) = ADP + phosphate + 5 H(+)(out). Functionally, produces ATP from ADP in the presence of a proton gradient across the membrane. The catalytic sites are hosted primarily by the beta subunits. The protein is ATP synthase subunit beta of Solibacter usitatus (strain Ellin6076).